The chain runs to 254 residues: Ribosomal RNA small subunit methyltransferase G (254 aa).

S-adenosyl-L-methionine-binding positions include G84, F89, 136–137, and R155; that span reads VE.

This sequence belongs to the methyltransferase superfamily. RNA methyltransferase RsmG family.

It is found in the cytoplasm. Functionally, specifically methylates the N7 position of a guanine in 16S rRNA. This Synechococcus sp. (strain CC9311) protein is Ribosomal RNA small subunit methyltransferase G.